The chain runs to 287 residues: MAFLDQHPGLGFPAAAGLGLLIGSFLNVVILRLPKRMEWQWRRDAREILELPDIYEPPPPGIVVEPSHDPVTGDKLKWWENIPLFSWLMLRGKSRYSGKPISIQYPLVELLTSILCVASVWRFGFGWQGFGAIVLSCFLVAMSGIDLRHKLLPDQLTLPLMWLGLVGSMDNLYMPAKPALLGAAVGYVSLWTVWWLFKQLTGKEGMGHGDFKLLAALGAWCGLKGILPIILISSLVGAVLGSIWLFAKGRDRATPIPFGPYLAIAGWVVFFWGNDLVDGYLRFAGLR.

The next 6 helical transmembrane spans lie at 10-30 (LGFP…NVVI), 101-121 (ISIQ…ASVW), 125-145 (FGWQ…MSGI), 177-197 (KPAL…WWLF), 226-246 (ILPI…IWLF), and 253-273 (ATPI…FFWG).

Belongs to the peptidase A24 family.

It is found in the cell inner membrane. It carries out the reaction Typically cleaves a -Gly-|-Phe- bond to release an N-terminal, basic peptide of 5-8 residues from type IV prepilin, and then N-methylates the new N-terminal amino group, the methyl donor being S-adenosyl-L-methionine.. In terms of biological role, plays an essential role in type IV pili and type II pseudopili formation by proteolytically removing the leader sequence from substrate proteins and subsequently monomethylating the alpha-amino group of the newly exposed N-terminal phenylalanine. This chain is Prepilin leader peptidase/N-methyltransferase (xpsO), found in Xanthomonas campestris pv. campestris (strain ATCC 33913 / DSM 3586 / NCPPB 528 / LMG 568 / P 25).